The primary structure comprises 374 residues: Secondary metabolism regulator laeA (374 aa).

The segment at methionine 1–proline 75 is disordered. Residues serine 23–aspartate 40 are compositionally biased toward polar residues. Methionine 207 is modified (S-methylmethionine).

This sequence belongs to the methyltransferase superfamily. LaeA methyltransferase family. As to quaternary structure, component of the heterotrimeric velvet complex composed of laeA, veA and velB; VeA acting as a bridging protein between laeA and velB. In terms of processing, self-methylates at Met-207.

Its subcellular location is the nucleus. It catalyses the reaction L-methionyl-[protein] + S-adenosyl-L-methionine = S-methyl-L-methionyl-[protein] + S-adenosyl-L-homocysteine. In terms of biological role, methyltransferase that performs automethylation at Met-207. No other methyl-accepting substrate has been identified yet. Component of the velvet transcription factor complex that acts as a global regulator for secondary metabolite gene expression. Controls the expression of the sterigmatocystin, penicillin, and lovastatin gene clusters. Controls light-dependent formation of the velB-vosA complex, veA protein modification, and is required for light-mediated inhibition of sexual development. Within the velvet complex, controls light-dependent secondary metabolism. Involved in the defense response against Drosophila melanogaster larval grazing. This Emericella nidulans (Aspergillus nidulans) protein is Secondary metabolism regulator laeA.